Consider the following 393-residue polypeptide: MSSLRGLGNIARRWRELNGVSYWKGLLDPLDVDLRNNIINYGELSQAAYTGLNRERRSRYAGSCLFSRKDFLSRVDVSNPNLYVITKFIYAMCTVSLPDAFMIKSWSKAAWSKQSNWMGFVAVATDEGKEVLGRRDVVVAWRGTIRMVEWMDDLDISLVPASEIVRPGSADDPCVHGGWLSVYTSADPESQYNKQSARYQVLNEIKRLQDMYEHEETSITITGHSLGAALATINATDIVSNGYNKSCPVSAFVFGSPRVGNPDFQKAFDSAPDLRLLRIRNSPDVVPNWPKLGYSDAGTELMIDTGKSPYLKAPGNPLTWHDMECYMHGVAGTQGSNGGFKLEIDRDIALVNKHEDALKNEYAIPSSWWVVQNKGMVKGTDGRWHLADHEDDD.

Residues 200 to 220 (QVLNEIKRLQDMYEHEETSIT) adopt a coiled-coil conformation. S225 serves as the catalytic Acyl-ester intermediate. Active-site charge relay system residues include S225, D284, and H321.

The protein belongs to the AB hydrolase superfamily. Lipase family.

It localises to the cytoplasm. Its function is as follows. Acylhydrolase that catalyzes the hydrolysis of phospholipids at the sn-1 position. This chain is Phospholipase A1-II 1, found in Oryza sativa subsp. indica (Rice).